We begin with the raw amino-acid sequence, 478 residues long: Putative multidrug resistance outer membrane protein MdtQ (478 aa).

An N-terminal signal peptide occupies residues 1–21; sequence MNRDSFYPAIACFPLLLMLAG. A lipid anchor (N-palmitoyl cysteine) is attached at cysteine 22. Residue cysteine 22 is the site of S-diacylglycerol cysteine attachment.

This sequence belongs to the outer membrane factor (OMF) (TC 1.B.17) family.

The protein localises to the cell outer membrane. Its function is as follows. Could be involved in resistance to puromycin, acriflavine and tetraphenylarsonium chloride. This chain is Putative multidrug resistance outer membrane protein MdtQ (mdtQ), found in Shigella flexneri.